Reading from the N-terminus, the 585-residue chain is Arginine--tRNA ligase (585 aa).

The 'HIGH' region signature appears at 131–141; that stretch reads ANPTGPMHVGH.

This sequence belongs to the class-I aminoacyl-tRNA synthetase family. In terms of assembly, monomer.

The protein resides in the cytoplasm. It carries out the reaction tRNA(Arg) + L-arginine + ATP = L-arginyl-tRNA(Arg) + AMP + diphosphate. This Bartonella quintana (strain Toulouse) (Rochalimaea quintana) protein is Arginine--tRNA ligase.